Reading from the N-terminus, the 68-residue chain is Antimicrobial peptide Eval655 (68 aa).

The N-terminal stretch at 1-23 is a signal peptide; sequence MKTQFVVLLVALVLLQMFAQSEA. Leucine amide is present on Leu36. Positions 37–68 are excised as a propeptide; that stretch reads GKRGLKNLDDFDDIFDDDLSSADLEFLKQLMR.

Belongs to the non-disulfide-bridged peptide (NDBP) superfamily. Short antimicrobial peptide (group 4) family. Expressed by the venom gland.

The protein localises to the secreted. In terms of biological role, probable antimicrobial peptide. Shows low inhibitory activity against herpes simplex virus type 1 (HSV-1). The sequence is that of Antimicrobial peptide Eval655 from Euscorpiops validus (Scorpion).